We begin with the raw amino-acid sequence, 210 residues long: Secreted effector protein SteA (210 aa).

Its subcellular location is the secreted. It is found in the host cytoplasm. Functionally, effector proteins function to alter host cell physiology and promote bacterial survival in host tissues. Could be required for passage of bacteria from the peritoneal cavity into the spleen, for survival and replication within host cells, or for avoiding host immune response. The polypeptide is Secreted effector protein SteA (steA) (Salmonella typhimurium (strain 14028s / SGSC 2262)).